The sequence spans 172 residues: L-amino acid N-acyltransferase MnaT (172 aa).

Positions methionine 1 to aspartate 163 constitute an N-acetyltransferase domain. Acetyl-CoA is bound by residues valine 85 to valine 87, glycine 93 to arginine 98, asparagine 124, and serine 133.

This sequence belongs to the acetyltransferase family. PAT/BAR subfamily.

It carries out the reaction L-methionine + acetyl-CoA = N-acetyl-L-methionine + CoA + H(+). The enzyme catalyses propanoyl-CoA + L-methionine = N-propanoyl-L-methioninate + CoA + H(+). The catalysed reaction is L-alpha-phenylglycine + acetyl-CoA = N-acetyl-L-alpha-phenylglycine + CoA + H(+). It catalyses the reaction L-methionine sulfoximine + acetyl-CoA = N-acetyl-L-methionine sulfoximine + CoA + H(+). It carries out the reaction L-methionine sulfone + acetyl-CoA = N-acetyl-L-methionine sulfone + CoA + H(+). Functionally, acyltransferase that appears to be required for E.coli optimal growth rate and yield via the formation of N-acetylated amino acids. Catalyzes the acylation of L-methionine using acetyl-CoA or propanoyl-CoA as acyl donors, and the acetylation of L-phenylglycine. Is also able to N-acylate other free L-amino acids and their derivatives using a CoA thioester as cosubstrate. Using acetyl-CoA as an acyl donor, substrate specificity is methionine sulfone &gt; methionine sulfoximine &gt; methionine sulfoxide &gt; methionine. Asparagine, lysine, glutamine, aspartate and glutamate are very poor substrates. Using methionine as a substrate, acyl donor preference is propanoyl-CoA &gt; acetyl-CoA &gt;&gt; butyryl-CoA. Likely plays a role in the resistance against the toxic effects of L-methionine sulfoximine (MSX), via its ability to catalyze its acetylation; MSX is a rare amino acid which inhibits glutamine synthetase (GlnA). The polypeptide is L-amino acid N-acyltransferase MnaT (Escherichia coli (strain K12)).